The following is a 308-amino-acid chain: Phosphoribosylaminoimidazole-succinocarboxamide synthase (308 aa).

Belongs to the SAICAR synthetase family.

It catalyses the reaction 5-amino-1-(5-phospho-D-ribosyl)imidazole-4-carboxylate + L-aspartate + ATP = (2S)-2-[5-amino-1-(5-phospho-beta-D-ribosyl)imidazole-4-carboxamido]succinate + ADP + phosphate + 2 H(+). It functions in the pathway purine metabolism; IMP biosynthesis via de novo pathway; 5-amino-1-(5-phospho-D-ribosyl)imidazole-4-carboxamide from 5-amino-1-(5-phospho-D-ribosyl)imidazole-4-carboxylate: step 1/2. The sequence is that of Phosphoribosylaminoimidazole-succinocarboxamide synthase from Stenotrophomonas maltophilia (strain R551-3).